We begin with the raw amino-acid sequence, 440 residues long: Probable cytosolic iron-sulfur protein assembly protein 1 (440 aa).

WD repeat units lie at residues 12 to 51 (AHAEPAWTVSFNPTRSLLASCSTDRTIRLYSYIIPSSSDG), 71 to 110 (DHKRTVRSIAWSPDGRTLASGSFDSTVGVWEEVIPLSDDE), 148 to 187 (GHESECKSVGFSSDGALLASCSRDKSVWVWEVQPDADFEC), 193 to 233 (EHSQ…WCIF), 278 to 317 (EEDETVWCLAWSPDGRWLASGGDNGGIRLWQRTGSQPDSA), 326 to 379 (AHSR…SPSS), and 401 to 440 (HGVNDINSVAWCVREDKKGWGMLSSAGDDGSVKVWRVVRD). Over residues 107 to 116 (SDDEEEEDEG) the composition is skewed to acidic residues. The disordered stretch occupies residues 107–137 (SDDEEEEDEGAQGVYKPAGVDSDGDGDGGKE).

Belongs to the WD repeat CIA1 family.

In terms of biological role, essential component of the cytosolic iron-sulfur (Fe/S) protein assembly machinery. Required for the maturation of extramitochondrial Fe/S proteins. This chain is Probable cytosolic iron-sulfur protein assembly protein 1, found in Cryptococcus neoformans var. neoformans serotype D (strain B-3501A) (Filobasidiella neoformans).